A 171-amino-acid polypeptide reads, in one-letter code: Adenine phosphoribosyltransferase (171 aa).

It belongs to the purine/pyrimidine phosphoribosyltransferase family. Homodimer.

Its subcellular location is the cytoplasm. It catalyses the reaction AMP + diphosphate = 5-phospho-alpha-D-ribose 1-diphosphate + adenine. The protein operates within purine metabolism; AMP biosynthesis via salvage pathway; AMP from adenine: step 1/1. Catalyzes a salvage reaction resulting in the formation of AMP, that is energically less costly than de novo synthesis. The protein is Adenine phosphoribosyltransferase of Halalkalibacterium halodurans (strain ATCC BAA-125 / DSM 18197 / FERM 7344 / JCM 9153 / C-125) (Bacillus halodurans).